The chain runs to 317 residues: Putative HTH-type transcriptional regulatory protein NP_1320A (317 aa).

Residues 132–189 (LSDIRSQEDMSLGKLANELGVSRRTVSKYEDGMSASVEVAAELEEIFDRKLASPVEVL) form the HTH cro/C1-type domain. Positions 143-162 (LGKLANELGVSRRTVSKYED) form a DNA-binding region, H-T-H motif.

This Natronomonas pharaonis (strain ATCC 35678 / DSM 2160 / CIP 103997 / JCM 8858 / NBRC 14720 / NCIMB 2260 / Gabara) (Halobacterium pharaonis) protein is Putative HTH-type transcriptional regulatory protein NP_1320A.